The primary structure comprises 218 residues: Peptide methionine sulfoxide reductase MsrA (218 aa).

Cys57 is an active-site residue.

Belongs to the MsrA Met sulfoxide reductase family.

The catalysed reaction is L-methionyl-[protein] + [thioredoxin]-disulfide + H2O = L-methionyl-(S)-S-oxide-[protein] + [thioredoxin]-dithiol. It carries out the reaction [thioredoxin]-disulfide + L-methionine + H2O = L-methionine (S)-S-oxide + [thioredoxin]-dithiol. Its function is as follows. Has an important function as a repair enzyme for proteins that have been inactivated by oxidation. Catalyzes the reversible oxidation-reduction of methionine sulfoxide in proteins to methionine. The polypeptide is Peptide methionine sulfoxide reductase MsrA (Brucella melitensis biotype 1 (strain ATCC 23456 / CCUG 17765 / NCTC 10094 / 16M)).